The sequence spans 1588 residues: Pentafunctional AROM polypeptide (1588 aa).

A 3-dehydroquinate synthase region spans residues 1–392 (MVQLAKVPIL…YGDSAQFVSD (392 aa)). Residues 43–45 (DTN), 78–81 (ETSK), 109–111 (GGV), and Asp114 each bind NAD(+). Arg125 contributes to the 7-phospho-2-dehydro-3-deoxy-D-arabino-heptonate binding site. 134-135 (TS) is a binding site for NAD(+). The 7-phospho-2-dehydro-3-deoxy-D-arabino-heptonate site is built by Asp141 and Lys147. Position 156 (Lys156) interacts with NAD(+). Position 157 (Asn157) interacts with 7-phospho-2-dehydro-3-deoxy-D-arabino-heptonate. NAD(+)-binding positions include 174 to 177 (WLET) and Asn185. Zn(2+) is bound at residue Glu189. Residues 189 to 192 (EVIK) and Lys258 each bind 7-phospho-2-dehydro-3-deoxy-D-arabino-heptonate. Residue Glu268 is the Proton acceptor; for 3-dehydroquinate synthase activity of the active site. 7-phospho-2-dehydro-3-deoxy-D-arabino-heptonate is bound by residues 272–276 (RNLLN) and His279. His279 is a binding site for Zn(2+). His283 acts as the Proton acceptor; for 3-dehydroquinate synthase activity in catalysis. 7-phospho-2-dehydro-3-deoxy-D-arabino-heptonate is bound by residues His295 and Lys364. His295 contributes to the Zn(2+) binding site. Residues 405–871 (VYPFKDIPAD…WDVLHSELGA (467 aa)) are EPSP synthase. Cys853 acts as the For EPSP synthase activity in catalysis. The segment at 890–1080 (SVVIIGMRAA…IPSGRSAFVC (191 aa)) is shikimate kinase. 895–902 (GMRAAGKT) provides a ligand contact to ATP. The tract at residues 1081 to 1293 (LTFDDLTEQT…AAPGQLTVAQ (213 aa)) is 3-dehydroquinase. The active-site Proton acceptor; for 3-dehydroquinate dehydratase activity is the His1198. Lys1227 serves as the catalytic Schiff-base intermediate with substrate; for 3-dehydroquinate dehydratase activity. The shikimate dehydrogenase stretch occupies residues 1306-1588 (PKELFVVGKP…KAIFDAVTKE (283 aa)).

It in the N-terminal section; belongs to the sugar phosphate cyclases superfamily. Dehydroquinate synthase family. In the 2nd section; belongs to the EPSP synthase family. The protein in the 3rd section; belongs to the shikimate kinase family. This sequence in the 4th section; belongs to the type-I 3-dehydroquinase family. It in the C-terminal section; belongs to the shikimate dehydrogenase family. As to quaternary structure, homodimer. Requires Zn(2+) as cofactor.

The protein resides in the cytoplasm. The enzyme catalyses 7-phospho-2-dehydro-3-deoxy-D-arabino-heptonate = 3-dehydroquinate + phosphate. It catalyses the reaction 3-dehydroquinate = 3-dehydroshikimate + H2O. The catalysed reaction is shikimate + NADP(+) = 3-dehydroshikimate + NADPH + H(+). It carries out the reaction shikimate + ATP = 3-phosphoshikimate + ADP + H(+). The enzyme catalyses 3-phosphoshikimate + phosphoenolpyruvate = 5-O-(1-carboxyvinyl)-3-phosphoshikimate + phosphate. Its pathway is metabolic intermediate biosynthesis; chorismate biosynthesis; chorismate from D-erythrose 4-phosphate and phosphoenolpyruvate: step 2/7. It functions in the pathway metabolic intermediate biosynthesis; chorismate biosynthesis; chorismate from D-erythrose 4-phosphate and phosphoenolpyruvate: step 3/7. The protein operates within metabolic intermediate biosynthesis; chorismate biosynthesis; chorismate from D-erythrose 4-phosphate and phosphoenolpyruvate: step 4/7. It participates in metabolic intermediate biosynthesis; chorismate biosynthesis; chorismate from D-erythrose 4-phosphate and phosphoenolpyruvate: step 5/7. Its pathway is metabolic intermediate biosynthesis; chorismate biosynthesis; chorismate from D-erythrose 4-phosphate and phosphoenolpyruvate: step 6/7. Functionally, the AROM polypeptide catalyzes 5 consecutive enzymatic reactions in prechorismate polyaromatic amino acid biosynthesis. This is Pentafunctional AROM polypeptide from Saccharomyces cerevisiae (strain Lalvin EC1118 / Prise de mousse) (Baker's yeast).